The following is a 536-amino-acid chain: Serine protease inhibitor 28Dc (536 aa).

The first 16 residues, 1 to 16 (MWRLLLALLLVSSVCC), serve as a signal peptide directing secretion. N-linked (GlcNAc...) asparagine glycosylation occurs at asparagine 355.

This sequence belongs to the serpin family.

It localises to the secreted. Serine protease inhibitor which is required for pupal viability and plays an essential role in regulating the melanization reaction. Inhibits spontaneous melanization and appears to be involved in the melanization immune response to physical wounding in larvae and adults. Acts by negatively regulating the Hayan-phenoloxidase (PPO1) cascade in the hemolymph and possibly the trachea. May function by controlling the initial release of the activated form of PPO1, phenoloxidase (PO) and thus maintains PO availability for processes such as wound response and pigmentation. The polypeptide is Serine protease inhibitor 28Dc (Drosophila melanogaster (Fruit fly)).